The primary structure comprises 1011 residues: RAS protein activator like-3 (1011 aa).

Residues 1–38 (MDPPSPSRTSQTQPTATSPLTSYRWHTGGGGEKAAGGF) form a disordered region. A compositionally biased stretch (low complexity) spans 7-22 (SRTSQTQPTATSPLTS). Phosphoserine is present on residues Ser-18 and Ser-51. Disordered stretches follow at residues 52–136 (HQEP…PVWD), 151–197 (GGEE…GPNQ), and 209–230 (KEKK…GSRE). The segment covering 81 to 95 (SRLRLSKALWGRHKN) has biased composition (basic residues). The span at 100 to 117 (PDPEPEQEAPELEPEPEL) shows a compositional bias: acidic residues. Pro residues predominate over residues 118 to 131 (EPPTPQIPEAPTPN). Residues Ser-164, Ser-166, Ser-167, and Ser-170 each carry the phosphoserine modification. A compositionally biased stretch (basic and acidic residues) spans 179-190 (RDPDRMPGKTEP). The PH domain maps to 197 to 293 (QVHNVRGLLK…WIEDLRRQFQ (97 aa)). Phosphoserine is present on residues Ser-224, Ser-228, and Ser-231. At Thr-234 the chain carries Phosphothreonine. The region spanning 284-404 (WIEDLRRQFQ…APAAGLERWF (121 aa)) is the C2 domain. One can recognise a Ras-GAP domain in the interval 474–682 (GRAQALVTDL…PAMQCFLDQV (209 aa)). Disordered stretches follow at residues 756-885 (QVHS…LGTH) and 987-1011 (LSPR…GDTT). Ser-787 and Ser-790 each carry phosphoserine. The segment covering 792–808 (RRSESWARPRPDEERPL) has biased composition (basic and acidic residues). Polar residues-rich tracts occupy residues 871-882 (QMDQPQDRNQAL) and 987-999 (LSPR…SQPQ). Residues 888-988 (VNKLAELQCE…RDAVQSLQLS (101 aa)) are a coiled coil. The residue at position 988 (Ser-988) is a Phosphoserine.

As to expression, predominantly expressed in cells of hematopoietic lineages.

The protein localises to the cytoplasm. It is found in the cell cortex. Functions as a Ras GTPase-activating protein. Plays an important role in the expansion and functions of natural killer T (NKT) cells in the liver by negatively regulating RAS activity and the down-stream ERK signaling pathway. This Homo sapiens (Human) protein is RAS protein activator like-3 (RASAL3).